The chain runs to 387 residues: 1,3-propanediol dehydrogenase (387 aa).

The protein belongs to the iron-containing alcohol dehydrogenase family. Homooctamer. The cofactor is Fe cation.

The enzyme catalyses propane-1,3-diol + NAD(+) = 3-hydroxypropanal + NADH + H(+). The chain is 1,3-propanediol dehydrogenase (dhaT) from Klebsiella pneumoniae.